We begin with the raw amino-acid sequence, 271 residues long: Phosphonates import ATP-binding protein PhnC 2 (271 aa).

Residues 2–245 (LVVEGLTCRF…IARELYDLEA (244 aa)) form the ABC transporter domain. 34-41 (GRSGAGKS) contacts ATP.

Belongs to the ABC transporter superfamily. Phosphonates importer (TC 3.A.1.9.1) family. The complex is composed of two ATP-binding proteins (PhnC), two transmembrane proteins (PhnE) and a solute-binding protein (PhnD).

It localises to the cell inner membrane. It carries out the reaction phosphonate(out) + ATP + H2O = phosphonate(in) + ADP + phosphate + H(+). In terms of biological role, part of the ABC transporter complex PhnCDE involved in phosphonates import. Responsible for energy coupling to the transport system. The sequence is that of Phosphonates import ATP-binding protein PhnC 2 from Rhodopseudomonas palustris (strain BisB18).